A 316-amino-acid chain; its full sequence is Beta-ketoacyl-[acyl-carrier-protein] synthase III (316 aa).

Active-site residues include Cys-112 and His-243. The ACP-binding stretch occupies residues 244–248 (QANLR). The active site involves Asn-273.

This sequence belongs to the thiolase-like superfamily. FabH family. Homodimer.

Its subcellular location is the cytoplasm. It catalyses the reaction malonyl-[ACP] + acetyl-CoA + H(+) = 3-oxobutanoyl-[ACP] + CO2 + CoA. The protein operates within lipid metabolism; fatty acid biosynthesis. Catalyzes the condensation reaction of fatty acid synthesis by the addition to an acyl acceptor of two carbons from malonyl-ACP. Catalyzes the first condensation reaction which initiates fatty acid synthesis and may therefore play a role in governing the total rate of fatty acid production. Possesses both acetoacetyl-ACP synthase and acetyl transacylase activities. Its substrate specificity determines the biosynthesis of branched-chain and/or straight-chain of fatty acids. The polypeptide is Beta-ketoacyl-[acyl-carrier-protein] synthase III (Yersinia pestis (strain Pestoides F)).